A 1919-amino-acid chain; its full sequence is Disks large homolog 5 (1919 aa).

The disordered stretch occupies residues 98 to 142 (AEGAGSTYSVLSTMPSDSESSSSLSSVGTTGKAPSPPPLLTDQQV). The span at 109–123 (STMPSDSESSSSLSS) shows a compositional bias: low complexity. Ser-264 and Ser-295 each carry phosphoserine. Residues 383–599 (LNKATAQNKD…LEKEARFRQL (217 aa)) adopt a coiled-coil conformation. 2 PDZ domains span residues 620–710 (VVEF…RRRK) and 705–796 (VVRR…LKVF). A Phosphoserine modification is found at Ser-900. Disordered stretches follow at residues 927-1122 (GVGE…FRPK), 1150-1187 (QEWA…PSTT), 1201-1230 (SHRV…HQGR), 1245-1264 (EMRA…LGSS), and 1271-1306 (AERI…PQSP). Position 984 is a phosphothreonine (Thr-984). Ser-1000 is subject to Phosphoserine. Thr-1011 bears the Phosphothreonine mark. Residues 1017 to 1030 (RRSDSIKFQHRLET) show a composition bias toward basic and acidic residues. Ser-1021 is modified (phosphoserine). Residues 1045–1055 (TSPPSALPPDV) are compositionally biased toward pro residues. A Phosphothreonine modification is found at Thr-1183. Ser-1209 and Ser-1263 each carry phosphoserine. 2 stretches are compositionally biased toward low complexity: residues 1252 to 1264 (SNSL…LGSS) and 1284 to 1298 (RSVV…SHSE). Ser-1334 carries the post-translational modification Phosphoserine. The region spanning 1350 to 1429 (HVKVQKGSEP…TITILAQYNP (80 aa)) is the PDZ 3 domain. A disordered region spans residues 1434 to 1493 (LSSHSRSSSHLDPAGTHSTLQGSGTTTPEHPSVIDPLMEQDEGPSTPPAKQSSSRIAGDA). Residues 1449–1462 (THSTLQGSGTTTPE) show a composition bias toward polar residues. The 82-residue stretch at 1501–1582 (RVVFIKKSQL…GVRLKVQYRP (82 aa)) folds into the PDZ 4 domain. An SH3 domain is found at 1593–1661 (GDSFYIRALY…PSKYVMDQEF (69 aa)). Ser-1666 is modified (phosphoserine). Positions 1722-1905 (DSVSLAYQRV…ICTQILAMVN (184 aa)) constitute a Guanylate kinase-like domain.

This sequence belongs to the MAGUK family. As to quaternary structure, interacts with MPP1. Interacts with CTNNB1 and with the third SH3 domain of SORBS3 to form a ternary complex. Interacts (via coiled-coil domain) with MARK3. Interacts (via PDZ domain 3) with STK3/MST2 and STK4/MST1. Interacts with SCRIB. Interacts with CTNB1, SMO and (via PDZ4 or guanylate kinase-like domain) with KIF7. In terms of tissue distribution, highly expressed in normal breast tissues and low-grade breast cancer tissues (at protein level). Highly expressed in the placenta and prostate. Expressed at a lower level in the thyroid, spinal cord, trachea, adrenal gland, skeletal muscle, pancreas, heart, brain, liver and kidney. A short splice product shows more limited expression, being absent from at least the brain.

It is found in the cell junction. The protein localises to the cell membrane. Its subcellular location is the postsynaptic density. The protein resides in the cytoplasm. It localises to the cytoskeleton. It is found in the cilium basal body. Its function is as follows. Acts as a regulator of the Hippo signaling pathway. Negatively regulates the Hippo signaling pathway by mediating the interaction of MARK3 with STK3/4, bringing them together to promote MARK3-dependent hyperphosphorylation and inactivation of STK3 kinase activity toward LATS1. Positively regulates the Hippo signaling pathway by mediating the interaction of SCRIB with STK4/MST1 and LATS1 which is important for the activation of the Hippo signaling pathway. Involved in regulating cell proliferation, maintenance of epithelial polarity, epithelial-mesenchymal transition (EMT), cell migration and invasion. Plays an important role in dendritic spine formation and synaptogenesis in cortical neurons; regulates synaptogenesis by enhancing the cell surface localization of N-cadherin. Acts as a positive regulator of hedgehog (Hh) signaling pathway. Plays a critical role in the early point of the SMO activity cycle by interacting with SMO at the ciliary base to induce the accumulation of KIF7 and GLI2 at the ciliary tip for GLI2 activation. This chain is Disks large homolog 5 (DLG5), found in Homo sapiens (Human).